Consider the following 511-residue polypeptide: Maturase K (511 aa).

The protein belongs to the intron maturase 2 family. MatK subfamily.

Its subcellular location is the plastid. The protein resides in the chloroplast. Usually encoded in the trnK tRNA gene intron. Probably assists in splicing its own and other chloroplast group II introns. This is Maturase K from Maihuenia poeppigii (Hardy cactus).